Reading from the N-terminus, the 82-residue chain is MGREFGNLARIRHVISYSLSPFEQRAFPSYFSKGIPNVLRRTRERILRVAPPFVVVYLIYTWGNQEFEQSKRKNPAMYENDK.

Over 1-43 (MGREFGNLARIRHVISYSLSPFEQRAFPSYFSKGIPNVLRRTR) the chain is Mitochondrial matrix. Ser-16 is subject to Phosphoserine. Lys-33 carries the N6-acetyllysine; alternate modification. Lys-33 is subject to N6-succinyllysine; alternate. The chain crosses the membrane as a helical span at residues 44–62 (ERILRVAPPFVVVYLIYTW). At 63 to 82 (GNQEFEQSKRKNPAMYENDK) the chain is on the mitochondrial intermembrane side.

Belongs to the UQCRQ/QCR8 family. Component of the ubiquinol-cytochrome c oxidoreductase (cytochrome b-c1 complex, complex III, CIII), a multisubunit enzyme composed of 11 subunits. The complex is composed of 3 respiratory subunits cytochrome b, cytochrome c1 and Rieske protein UQCRFS1, 2 core protein subunits UQCRC1/QCR1 and UQCRC2/QCR2, and 6 low-molecular weight protein subunits UQCRH/QCR6, UQCRB/QCR7, UQCRQ/QCR8, UQCR10/QCR9, UQCR11/QCR10 and subunit 9, the cleavage product of Rieske protein UQCRFS1. The complex exists as an obligatory dimer and forms supercomplexes (SCs) in the inner mitochondrial membrane with NADH-ubiquinone oxidoreductase (complex I, CI) and cytochrome c oxidase (complex IV, CIV), resulting in different assemblies (supercomplex SCI(1)III(2)IV(1) and megacomplex MCI(2)III(2)IV(2)). Interacts with UQCC6.

The protein localises to the mitochondrion inner membrane. Component of the ubiquinol-cytochrome c oxidoreductase, a multisubunit transmembrane complex that is part of the mitochondrial electron transport chain which drives oxidative phosphorylation. The respiratory chain contains 3 multisubunit complexes succinate dehydrogenase (complex II, CII), ubiquinol-cytochrome c oxidoreductase (cytochrome b-c1 complex, complex III, CIII) and cytochrome c oxidase (complex IV, CIV), that cooperate to transfer electrons derived from NADH and succinate to molecular oxygen, creating an electrochemical gradient over the inner membrane that drives transmembrane transport and the ATP synthase. The cytochrome b-c1 complex catalyzes electron transfer from ubiquinol to cytochrome c, linking this redox reaction to translocation of protons across the mitochondrial inner membrane, with protons being carried across the membrane as hydrogens on the quinol. In the process called Q cycle, 2 protons are consumed from the matrix, 4 protons are released into the intermembrane space and 2 electrons are passed to cytochrome c. In Mus musculus (Mouse), this protein is Cytochrome b-c1 complex subunit 8 (Uqcrq).